The following is a 505-amino-acid chain: UDP-N-acetylmuramoyl-L-alanyl-D-glutamate--2,6-diaminopimelate ligase (505 aa).

Ser42 is a binding site for UDP-N-acetyl-alpha-D-muramoyl-L-alanyl-D-glutamate. 126–132 lines the ATP pocket; it reads GTNGKTT. Residues 168–169, Ser195, Gln201, and Arg203 contribute to the UDP-N-acetyl-alpha-D-muramoyl-L-alanyl-D-glutamate site; that span reads TT. Lys235 carries the N6-carboxylysine modification. Meso-2,6-diaminopimelate is bound by residues Arg399, 423–426, Gly474, and Glu478; that span reads DNPR. Residues 423–426 carry the Meso-diaminopimelate recognition motif motif; sequence DNPR.

The protein belongs to the MurCDEF family. MurE subfamily. Requires Mg(2+) as cofactor. Post-translationally, carboxylation is probably crucial for Mg(2+) binding and, consequently, for the gamma-phosphate positioning of ATP.

The protein resides in the cytoplasm. The catalysed reaction is UDP-N-acetyl-alpha-D-muramoyl-L-alanyl-D-glutamate + meso-2,6-diaminopimelate + ATP = UDP-N-acetyl-alpha-D-muramoyl-L-alanyl-gamma-D-glutamyl-meso-2,6-diaminopimelate + ADP + phosphate + H(+). Its pathway is cell wall biogenesis; peptidoglycan biosynthesis. Functionally, catalyzes the addition of meso-diaminopimelic acid to the nucleotide precursor UDP-N-acetylmuramoyl-L-alanyl-D-glutamate (UMAG) in the biosynthesis of bacterial cell-wall peptidoglycan. In Synechocystis sp. (strain ATCC 27184 / PCC 6803 / Kazusa), this protein is UDP-N-acetylmuramoyl-L-alanyl-D-glutamate--2,6-diaminopimelate ligase.